A 577-amino-acid polypeptide reads, in one-letter code: Sulfite reductase [NADPH] hemoprotein beta-component (577 aa).

Residues Cys-440, Cys-446, Cys-486, and Cys-490 each coordinate [4Fe-4S] cluster. Cys-490 contacts siroheme.

It belongs to the nitrite and sulfite reductase 4Fe-4S domain family. Alpha(8)-beta(8). The alpha component is a flavoprotein, the beta component is a hemoprotein. It depends on siroheme as a cofactor. The cofactor is [4Fe-4S] cluster.

The catalysed reaction is hydrogen sulfide + 3 NADP(+) + 3 H2O = sulfite + 3 NADPH + 4 H(+). Its pathway is sulfur metabolism; hydrogen sulfide biosynthesis; hydrogen sulfide from sulfite (NADPH route): step 1/1. In terms of biological role, component of the sulfite reductase complex that catalyzes the 6-electron reduction of sulfite to sulfide. This is one of several activities required for the biosynthesis of L-cysteine from sulfate. The sequence is that of Sulfite reductase [NADPH] hemoprotein beta-component from Vibrio cholerae serotype O1 (strain ATCC 39541 / Classical Ogawa 395 / O395).